The following is an 81-amino-acid chain: MENSNKVPISKIGLIMLMIFSTFFMSPHARRLEGGSNIDSQRLLHELMVDRIKQKRSRTDLEDKAVPGDRLSPGGPNHIHN.

A signal peptide spans 1–31 (MENSNKVPISKIGLIMLMIFSTFFMSPHARR). The span at 55 to 67 (KRSRTDLEDKAVP) shows a compositional bias: basic and acidic residues. Residues 55 to 81 (KRSRTDLEDKAVPGDRLSPGGPNHIHN) are disordered. Hydroxyproline occurs at positions 73 and 76. A glycan (O-linked (Ara...) hydroxyproline) is linked at proline 76.

The protein belongs to the CLV3/ESR signal peptide family. The O-glycosylation (arabinosylation) of the hydroxyproline Pro-76 enhances binding affinity of the CLE12p peptide for its receptor. As to expression, expressed in young nodules throughout the central tissue. Expressed in the apical region of elongated nodules, corresponding to the meristematic and early infection zones.

The protein resides in the secreted. Its subcellular location is the extracellular space. Its function is as follows. Signaling peptide involved in the regulation of nodulation. Moves from root to shoot to function with the receptor kinase SUNN, in a signaling pathway that plays roles during cellular differentiation, both at the onset of nodulation, and later during nodule meristem development and subsequent homeostasis. Interacts with SUNN signaling to control nodule numbers. SUNN is involved in the autoregulation of nodulation (AON), a long distance systemic signaling from root to shoot and back again, which allows legumes to limit the number of root nodules formed based on available nitrogen and previous rhizobial colonization. The polypeptide is CLAVATA3/ESR (CLE)-related protein 12 (Medicago truncatula (Barrel medic)).